The following is a 428-amino-acid chain: Spliceosome RNA helicase DDX39B (428 aa).

Positions 1–19 (MAENDVDNELLDYEEDEVE) are enriched in acidic residues. A disordered region spans residues 1–32 (MAENDVDNELLDYEEDEVETAAGGDGSEAPAK). Residue alanine 2 is modified to N-acetylalanine. Position 36 is an N6-acetyllysine; alternate (lysine 36). Lysine 36 participates in a covalent cross-link: Glycyl lysine isopeptide (Lys-Gly) (interchain with G-Cter in SUMO2); alternate. Residues serine 38 and serine 41 each carry the phosphoserine modification. The Q motif motif lies at 45–73 (SGFRDFLLKPELLRAIVDCGFEHPSEVQH). A Helicase ATP-binding domain is found at 76 to 249 (IPQAILGMDV…RKFMQDPMEI (174 aa)). 89–96 (AKSGMGKT) is a binding site for ATP. Threonine 172 carries the phosphothreonine modification. The short motif at 196-199 (DECD) is the DECD box element. One can recognise a Helicase C-terminal domain in the interval 261–422 (GLQQYYVKLK…ELPDEIDISS (162 aa)).

It belongs to the DEAD box helicase family. DECD subfamily. As to quaternary structure, homodimer, and heterodimer with DDX39A. DDX39B interacts with the THO subcomplex to form the THO-DDX39B complex which multimerizes into a 28-subunit tetrameric assembly. Component of the transcription/export (TREX) complex at least composed of ALYREF/THOC4, DDX39B, SARNP/CIP29, CHTOP and the THO subcomplex; in the complex interacts with THOC2. THOC1-THOC2-THOC3-DDX39B subcomplex is sufficient for the interaction with export factor NXF1-NXT1. TREX seems to have a dynamic structure involving ATP-dependent remodeling. Within the TREX complex bridges ALYREF/THOC4 and the THO subcomplex, and, in a ATP-dependent manner, ALYREF/THOC4 and SARNP/CIP29. Component of the spliceosome. Interacts directly with U2AF2. Interacts with RBM8A, RNPS1 and SRRM1, FYTTD1/UIF, THOC1, MX1 and POLDIP3. Interacts with LUZP4. Interacts with SARNP/CIP29 (via the C-terminal domain); the interaction is direct and facilitates RNA binding of DDX39B.

The protein localises to the nucleus. It is found in the nucleus speckle. It localises to the cytoplasm. It catalyses the reaction ATP + H2O = ADP + phosphate + H(+). Involved in nuclear export of spliced and unspliced mRNA. Component of the TREX complex which is thought to couple mRNA transcription, processing and nuclear export, and specifically associates with spliced mRNA and not with unspliced pre-mRNA. The TREX complex is recruited to spliced mRNAs by a transcription-independent mechanism, binds to mRNA upstream of the exon-junction complex (EJC) and is recruited in a splicing- and cap-dependent manner to a region near the 5' end of the mRNA where it functions in mRNA export to the cytoplasm via the TAP/NXF1 pathway. The THOC1-THOC2-THOC3 core complex alone is sufficient to promote ATPase activity of DDX39B; in the complex THOC2 is the only component that directly interacts with DDX39B. Associates with SARNP/CIP29, which facilitates RNA binding of DDX39B and likely plays a role in mRNA export. May undergo several rounds of ATP hydrolysis during assembly of TREX to drive subsequent loading of components such as ALYREF/THOC4 and CHTOP onto mRNA. Also associates with pre-mRNA independent of ALYREF/THOC4. Involved in the nuclear export of intronless mRNA; the ATP-bound form is proposed to recruit export adapter ALYREF/THOC4 to intronless mRNA; its ATPase activity is cooperatively stimulated by RNA and ALYREF/THOC4 and ATP hydrolysis is thought to trigger the dissociation from RNA to allow the association of ALYREF/THOC4 and the NXF1-NXT1 heterodimer. Involved in transcription elongation and genome stability. Its function is as follows. Splice factor that is required for the first ATP-dependent step in spliceosome assembly and for the interaction of U2 snRNP with the branchpoint. Has both RNA-stimulated ATP binding/hydrolysis activity and ATP-dependent RNA unwinding activity. Even with the stimulation of RNA, the ATPase activity is weak. Can only hydrolyze ATP but not other NTPs. The RNA stimulation of ATPase activity does not have a strong preference for the sequence and length of the RNA. However, ssRNA stimulates the ATPase activity much more strongly than dsRNA. Can unwind 5' or 3' overhangs or blunt end RNA duplexes in vitro. The ATPase and helicase activities are not influenced by U2AF2; the effect of ALYREF/THOC4 is reported conflictingly. In Canis lupus familiaris (Dog), this protein is Spliceosome RNA helicase DDX39B (DDX39B).